The following is a 270-amino-acid chain: Flagellar hook-basal body complex protein FlhO (270 aa).

This sequence belongs to the flagella basal body rod proteins family.

Its function is as follows. Not required for motility. The protein is Flagellar hook-basal body complex protein FlhO (flhO) of Bacillus subtilis (strain 168).